The following is a 385-amino-acid chain: MTSPPSPLDFFWFIPTHGDGSYLGSEEQQRPPEFGYFKQIAQAVDRLGFPGVLLPTGQNCEDSWITATGLATLTEKLKFLVALRPGVTLPTFAARQTAALDRLSNGRLLLNVVVGGNPTELAGDGVFLPHDERYAQAHEFLTIWRGLVSGERVNFDGKYYRVENGRLDLLPSQERPPLYFGGSSDAGQDLAADLVDMYLTWGEPPALVAEKLASARKKAALRGRKLRFGIRLHFIVRETEDEAWRAADRLISHVTDAQIENAQARFLNQMDSVGQRRMAELHGGRRDRLVVSPNLWAGVGLVRGGAGTALVGTPEQVTERIREYQAIGIDTIIGSGYPHLEEAYRVAELLFPRLGLGTRRQQAHRDIANEFSVGFHGAARLQASS.

This sequence belongs to the SsuD family.

The catalysed reaction is an alkanesulfonate + FMNH2 + O2 = an aldehyde + FMN + sulfite + H2O + 2 H(+). Functionally, catalyzes the desulfonation of aliphatic sulfonates. The polypeptide is Alkanesulfonate monooxygenase 2 (ssuD2) (Mesorhizobium japonicum (strain LMG 29417 / CECT 9101 / MAFF 303099) (Mesorhizobium loti (strain MAFF 303099))).